The chain runs to 356 residues: Malate dehydrogenase, glyoxysomal (356 aa).

The N-terminal 36 residues, 1-36 (MQPIPDVNQRIARISAHLHPPKSQMEESSALRRANC), are a transit peptide targeting the glyoxysome. NAD(+) is bound by residues 51-57 (GAAGGIG) and aspartate 77. The substrate site is built by arginine 124 and arginine 130. Residues asparagine 137 and 160–162 (ISN) contribute to the NAD(+) site. 2 residues coordinate substrate: asparagine 162 and arginine 196. Catalysis depends on histidine 220, which acts as the Proton acceptor. Methionine 271 is an NAD(+) binding site.

Belongs to the LDH/MDH superfamily. MDH type 1 family. In terms of assembly, homodimer.

It is found in the glyoxysome. The enzyme catalyses (S)-malate + NAD(+) = oxaloacetate + NADH + H(+). The polypeptide is Malate dehydrogenase, glyoxysomal (Citrullus lanatus (Watermelon)).